The following is a 301-amino-acid chain: 2-phosphoglycerate kinase (301 aa).

Residues I2–V89 form the ATP-cone domain.

Belongs to the 2-phosphoglycerate kinase family. Requires a divalent metal cation as cofactor.

The catalysed reaction is (2R)-2-phosphoglycerate + ATP = (2R)-2,3-bisphosphoglycerate + ADP + H(+). It functions in the pathway thermoadapter biosynthesis; cyclic 2,3-diphosphoglycerate biosynthesis; cyclic 2,3-diphosphoglycerate from 2-phospho-D-glycerate: step 1/2. Catalyzes the phosphorylation of 2-phosphoglycerate to 2,3-diphosphoglycerate. Involved in the biosynthesis of cyclic 2,3-bisphosphoglycerate, a thermoprotectant. The chain is 2-phosphoglycerate kinase from Pyrococcus horikoshii (strain ATCC 700860 / DSM 12428 / JCM 9974 / NBRC 100139 / OT-3).